The sequence spans 199 residues: BREX protein BrxA (199 aa).

It belongs to the BrxA family.

In terms of biological role, BREX systems (bacteriophage exclusion) provide immunity against bacteriophage. Part of a type 1 BREX system which protects against dsDNA phage. This system allows phage adsorption but prevents phage DNA replication, without degradation of the phage DNA. Methylation of bacterial DNA by PglX guides self/non-self discrimination. The protein is BREX protein BrxA of Paramagnetospirillum magneticum (strain ATCC 700264 / AMB-1) (Magnetospirillum magneticum).